Here is a 246-residue protein sequence, read N- to C-terminus: Ribonuclease 3 (246 aa).

Residues 16 to 146 (ATELEAGIGY…LLAAVYLDGG (131 aa)) enclose the RNase III domain. Glutamate 59 contacts Mg(2+). The active site involves aspartate 63. The Mg(2+) site is built by asparagine 132 and glutamate 135. The active site involves glutamate 135. The region spanning 173 to 242 (DFKTEFQEMV…ARQVLARFAA (70 aa)) is the DRBM domain.

It belongs to the ribonuclease III family. In terms of assembly, homodimer. Mg(2+) serves as cofactor.

Its subcellular location is the cytoplasm. The enzyme catalyses Endonucleolytic cleavage to 5'-phosphomonoester.. Functionally, digests double-stranded RNA. Involved in the processing of primary rRNA transcript to yield the immediate precursors to the large and small rRNAs (23S and 16S). Processes some mRNAs, and tRNAs when they are encoded in the rRNA operon. Processes pre-crRNA and tracrRNA of type II CRISPR loci if present in the organism. This Geobacter metallireducens (strain ATCC 53774 / DSM 7210 / GS-15) protein is Ribonuclease 3.